We begin with the raw amino-acid sequence, 271 residues long: Calretinin (271 aa).

EF-hand domains are found at residues 16-51 (LTAS…LEKA), 63-98 (NFGE…EENF), 107-142 (GSSA…LLKK), 151-186 (KLQE…QENF), 195-230 (LTSE…LYEK), and 235-270 (MNIQ…SEPP). Asp-29, Asp-31, Asn-33, Tyr-35, Glu-40, Asp-76, Asn-78, Asp-80, Lys-82, Glu-87, Asp-120, Asp-122, Ser-124, Tyr-126, Glu-131, Asp-164, Asn-166, Asp-168, Lys-170, Glu-175, Asp-208, Asp-210, Ser-212, Tyr-214, and Glu-219 together coordinate Ca(2+). At Tyr-214 the chain carries Phosphotyrosine.

The protein belongs to the calbindin family.

It is found in the synapse. Its subcellular location is the cell projection. It localises to the dendrite. In terms of biological role, calcium-binding protein involved in calcium homeostasis and signal transduction. It plays a critical role in buffering intracellular calcium levels and modulating calcium-dependent signaling pathways. Predominantly expressed in specific neuronal populations, influences synaptic plasticity and neuronal excitability, contributing to learning and memory. During embryonic development, it facilitates neuronal differentiation and maturation. The polypeptide is Calretinin (Calb2) (Rattus norvegicus (Rat)).